The chain runs to 535 residues: Signal transduction histidine-protein kinase AfsQ2 (535 aa).

The Cytoplasmic portion of the chain corresponds to 1–30 (MTREHQGGTRGLAAARKGFWSGLRFTSLRL). Residues 31–52 (RLVLVFGLVALTAAVSASGIAY) form a helical membrane-spanning segment. At 53–198 (WLNREAVLTR…SLEPEAKDLN (146 aa)) the chain is on the extracellular side. Residues 199-219 (SLAWSLGIATALALLGSALLA) traverse the membrane as a helical segment. The Cytoplasmic segment spans residues 220–535 (QALATTVLKP…DRGKDAKGQV (316 aa)). Positions 224-276 (TTVLKPVHRLGVAARRLGEGKLDTRLRVSGTDELADLSRTFNSAAENLEKRVA) constitute an HAMP domain. The 220-residue stretch at 291 to 510 (DMSHELRTPL…VFTLRLPQDP (220 aa)) folds into the Histidine kinase domain. His294 is subject to Phosphohistidine. The disordered stretch occupies residues 493–535 (ENAPEGGAVFTLRLPQDPSPPADEDGGPDEETEDRGKDAKGQV). Residues 514-525 (ADEDGGPDEETE) are compositionally biased toward acidic residues. The span at 526–535 (DRGKDAKGQV) shows a compositional bias: basic and acidic residues.

The protein localises to the cell membrane. The enzyme catalyses ATP + protein L-histidine = ADP + protein N-phospho-L-histidine.. Functionally, forms part of a two-component regulatory system AfsQ1/AfsQ2 involved in secondary metabolism. May activate AfsQ1 by phosphorylation. The chain is Signal transduction histidine-protein kinase AfsQ2 (afsQ2) from Streptomyces coelicolor (strain ATCC BAA-471 / A3(2) / M145).